The primary structure comprises 80 residues: MSQEAILEKVRSIVAEQLSVEASEIKPDSNFQNDLGADSLDTVELVMALEEAFDIEIPDEAAEGITTVGDAVKYIEDKQS.

The Carrier domain maps to 4 to 79 (EAILEKVRSI…DAVKYIEDKQ (76 aa)). Serine 39 carries the post-translational modification O-(pantetheine 4'-phosphoryl)serine.

Belongs to the acyl carrier protein (ACP) family. In terms of processing, 4'-phosphopantetheine is transferred from CoA to a specific serine of apo-ACP by AcpS. This modification is essential for activity because fatty acids are bound in thioester linkage to the sulfhydryl of the prosthetic group.

It localises to the cytoplasm. The protein operates within lipid metabolism; fatty acid biosynthesis. Functionally, carrier of the growing fatty acid chain in fatty acid biosynthesis. The sequence is that of Acyl carrier protein from Prochlorococcus marinus (strain SARG / CCMP1375 / SS120).